Consider the following 27-residue polypeptide: Natriuretic peptides A (27 aa).

A disulfide bond links Cys7 and Cys23.

This sequence belongs to the natriuretic peptide family.

The protein resides in the secreted. Hormone playing a key role in cardiovascular homeostasis through regulation of natriuresis, diuresis, and vasodilation. Has a cGMP-stimulating activity. This is Natriuretic peptides A (nppa) from Anguilla japonica (Japanese eel).